The sequence spans 445 residues: UDP-N-acetylmuramoylalanine--D-glutamate ligase (445 aa).

ATP is bound at residue 117–123; it reads GSNGKTT.

It belongs to the MurCDEF family.

Its subcellular location is the cytoplasm. It catalyses the reaction UDP-N-acetyl-alpha-D-muramoyl-L-alanine + D-glutamate + ATP = UDP-N-acetyl-alpha-D-muramoyl-L-alanyl-D-glutamate + ADP + phosphate + H(+). It participates in cell wall biogenesis; peptidoglycan biosynthesis. Cell wall formation. Catalyzes the addition of glutamate to the nucleotide precursor UDP-N-acetylmuramoyl-L-alanine (UMA). This chain is UDP-N-acetylmuramoylalanine--D-glutamate ligase, found in Neisseria meningitidis serogroup C (strain 053442).